A 168-amino-acid chain; its full sequence is Ribosome maturation factor RimM (168 aa).

The PRC barrel domain maps to 97-168 (PNEYYYYELL…RLVVKVPEWI (72 aa)).

This sequence belongs to the RimM family. Binds ribosomal protein uS19.

It localises to the cytoplasm. An accessory protein needed during the final step in the assembly of 30S ribosomal subunit, possibly for assembly of the head region. Essential for efficient processing of 16S rRNA. May be needed both before and after RbfA during the maturation of 16S rRNA. It has affinity for free ribosomal 30S subunits but not for 70S ribosomes. This Pseudothermotoga lettingae (strain ATCC BAA-301 / DSM 14385 / NBRC 107922 / TMO) (Thermotoga lettingae) protein is Ribosome maturation factor RimM.